The sequence spans 116 residues: Large ribosomal subunit protein bL19 (116 aa).

It belongs to the bacterial ribosomal protein bL19 family.

Functionally, this protein is located at the 30S-50S ribosomal subunit interface and may play a role in the structure and function of the aminoacyl-tRNA binding site. The protein is Large ribosomal subunit protein bL19 of Staphylococcus saprophyticus subsp. saprophyticus (strain ATCC 15305 / DSM 20229 / NCIMB 8711 / NCTC 7292 / S-41).